A 215-amino-acid polypeptide reads, in one-letter code: Glycerol-3-phosphate acyltransferase (215 aa).

A run of 5 helical transmembrane segments spans residues 1 to 21 (MAFL…SIPT), 57 to 77 (IFVL…VKLW), 85 to 105 (MIPL…AVLG), 126 to 146 (VLLV…LAML), and 165 to 185 (VLMF…IVGL).

This sequence belongs to the PlsY family. As to quaternary structure, probably interacts with PlsX.

The protein resides in the cell inner membrane. It carries out the reaction an acyl phosphate + sn-glycerol 3-phosphate = a 1-acyl-sn-glycero-3-phosphate + phosphate. It participates in lipid metabolism; phospholipid metabolism. In terms of biological role, catalyzes the transfer of an acyl group from acyl-phosphate (acyl-PO(4)) to glycerol-3-phosphate (G3P) to form lysophosphatidic acid (LPA). This enzyme utilizes acyl-phosphate as fatty acyl donor, but not acyl-CoA or acyl-ACP. The chain is Glycerol-3-phosphate acyltransferase from Crocosphaera subtropica (strain ATCC 51142 / BH68) (Cyanothece sp. (strain ATCC 51142)).